The following is a 520-amino-acid chain: Probable bifunctional tRNA threonylcarbamoyladenosine biosynthesis protein (520 aa).

The tract at residues 1 to 318 (MKIGPVLGIE…YRADQVLVTW (318 aa)) is kae1. Fe cation-binding residues include His105, His109, and Tyr126. L-threonylcarbamoyladenylate is bound by residues 126-130 (YASGA), Asp158, Gly171, Glu175, and Asn251. Asp279 lines the Fe cation pocket. Residues 327-520 (RHPDAYSARG…HEIELRGRYL (194 aa)) enclose the Protein kinase domain. Residues 333–341 (SARGAEAIV) and Lys350 each bind ATP. Asp437 serves as the catalytic Proton acceptor; for kinase activity.

In the N-terminal section; belongs to the KAE1 / TsaD family. It in the C-terminal section; belongs to the protein kinase superfamily. Tyr protein kinase family. BUD32 subfamily. In terms of assembly, component of the KEOPS complex that consists of Kae1, Bud32, Cgi121 and Pcc1; the whole complex dimerizes. Fe(2+) serves as cofactor.

It localises to the cytoplasm. It carries out the reaction L-seryl-[protein] + ATP = O-phospho-L-seryl-[protein] + ADP + H(+). The catalysed reaction is L-threonyl-[protein] + ATP = O-phospho-L-threonyl-[protein] + ADP + H(+). The enzyme catalyses L-threonylcarbamoyladenylate + adenosine(37) in tRNA = N(6)-L-threonylcarbamoyladenosine(37) in tRNA + AMP + H(+). Its function is as follows. Required for the formation of a threonylcarbamoyl group on adenosine at position 37 (t(6)A37) in tRNAs that read codons beginning with adenine. Is a component of the KEOPS complex that is probably involved in the transfer of the threonylcarbamoyl moiety of threonylcarbamoyl-AMP (TC-AMP) to the N6 group of A37. The Kae1 domain likely plays a direct catalytic role in this reaction. The Bud32 domain probably displays kinase activity that regulates Kae1 function. The protein is Probable bifunctional tRNA threonylcarbamoyladenosine biosynthesis protein of Methanospirillum hungatei JF-1 (strain ATCC 27890 / DSM 864 / NBRC 100397 / JF-1).